The primary structure comprises 347 residues: Chlorophyllase type 0 (347 aa).

A signal peptide spans 1-19 (MAKLLLLIFGVFIFVNSQA). Residues 20–30 (QTFPTILEKHN) constitute a propeptide that is removed on maturation. The short motif at 160–164 (GHSRG) is the GXSXG element. Ser-162 (nucleophile) is an active-site residue. Residue Asp-191 is the Charge relay system of the active site. N-linked (GlcNAc...) asparagine glycans are attached at residues Asn-215, Asn-229, and Asn-251. His-262 functions as the Charge relay system in the catalytic mechanism. The N-linked (GlcNAc...) asparagine glycan is linked to Asn-321.

Belongs to the AB hydrolase superfamily. Lipase family.

It catalyses the reaction a chlorophyll + H2O = a chlorophyllide + phytol + H(+). The catalysed reaction is chlorophyll a + H2O = phytol + chlorophyllide a + H(+). The protein operates within porphyrin-containing compound metabolism; chlorophyll degradation. With respect to regulation, inhibited by diisopropyl fluorophosphate (DFP), phenylmethanesulfonyl fluoride (PMSF) or p-chloromercuribenzoic acid (PCMB), but not by N-ethylmaleimide (NEM) or iodoacetamide. Catalyzes the hydrolysis of ester bond in chlorophyll to yield chlorophyllide and phytol. This Chenopodium album (Fat hen) protein is Chlorophyllase type 0.